The sequence spans 121 residues: Large ribosomal subunit protein bL12 (121 aa).

The protein belongs to the bacterial ribosomal protein bL12 family. In terms of assembly, homodimer. Part of the ribosomal stalk of the 50S ribosomal subunit. Forms a multimeric L10(L12)X complex, where L10 forms an elongated spine to which 2 to 4 L12 dimers bind in a sequential fashion. Binds GTP-bound translation factors.

Forms part of the ribosomal stalk which helps the ribosome interact with GTP-bound translation factors. Is thus essential for accurate translation. The sequence is that of Large ribosomal subunit protein bL12 from Mesomycoplasma hyopneumoniae (strain 7448) (Mycoplasma hyopneumoniae).